The chain runs to 558 residues: MRKGGWWLALGMFSASALATCPDWPPARGRQEISRLHQQIVAWKEDYWRQGASEVSDEVYDQLTLRLAQWRQCFPGTTPEDDDLPPPTGDARHPVAHTGVRKLADEVSVAHWMKNKTDLWIQPKVDGVAVTLVYRQGSLVQAISRGDGLRGEAWTARARQIPALAKVTTGELANSVLQGELFLRRDGHVQQQAGGMNARAKVAGLMMRADAAAALSQLDVFIWAWPDGPSDMRRRQQLLTQAGFKYSGQYTHPVTRVEQVAQWRQRWYRSPLPFVSDGVIVREGREPPGRAWSPGKGEWLAAWKYPPASQVMEVRAIHFSTGRSGRLNVVAQLEPQRLDDKRVQRVNVGSVARWQALDIGVGDQLQISLAGQGIPRIDAVVWRTAERHKPTPPAAKFNALTCYFATPECSEQFLSRLIWLSSKSALDVDGVGEHLWRAIQQQNPMTHIFSWLALTVEQLQAVPGISAARGQHLWHQFDLVRKRPFIRWVLAMGLPVPQGALAQLESENWHLLAAKSEAQWRALPGVGEIRARQLVAFLHHPDVVALAQWLSGQRIPGF.

The N6-AMP-lysine intermediate role is filled by lysine 124.

This sequence belongs to the NAD-dependent DNA ligase family. LigB subfamily.

The catalysed reaction is NAD(+) + (deoxyribonucleotide)n-3'-hydroxyl + 5'-phospho-(deoxyribonucleotide)m = (deoxyribonucleotide)n+m + AMP + beta-nicotinamide D-nucleotide.. Catalyzes the formation of phosphodiester linkages between 5'-phosphoryl and 3'-hydroxyl groups in double-stranded DNA using NAD as a coenzyme and as the energy source for the reaction. The protein is DNA ligase B of Klebsiella pneumoniae (strain 342).